The primary structure comprises 444 residues: Ribosomal protein uS12 methylthiotransferase RimO (444 aa).

The 117-residue stretch at 4-120 folds into the MTTase N-terminal domain; it reads KSAALVSLGC…LKSFIRDHEA (117 aa). Positions 13, 49, 83, 157, 161, and 164 each coordinate [4Fe-4S] cluster. Residues 143 to 371 form the Radical SAM core domain; the sequence is VEGRSSAYVK…LELQRGISRR (229 aa). One can recognise a TRAM domain in the interval 374–442; it reads ESLVGRVLPV…DYDVEAELLS (69 aa).

Belongs to the methylthiotransferase family. RimO subfamily. Requires [4Fe-4S] cluster as cofactor.

The protein localises to the cytoplasm. It catalyses the reaction L-aspartate(89)-[ribosomal protein uS12]-hydrogen + (sulfur carrier)-SH + AH2 + 2 S-adenosyl-L-methionine = 3-methylsulfanyl-L-aspartate(89)-[ribosomal protein uS12]-hydrogen + (sulfur carrier)-H + 5'-deoxyadenosine + L-methionine + A + S-adenosyl-L-homocysteine + 2 H(+). Its function is as follows. Catalyzes the methylthiolation of an aspartic acid residue of ribosomal protein uS12. The chain is Ribosomal protein uS12 methylthiotransferase RimO from Syntrophobacter fumaroxidans (strain DSM 10017 / MPOB).